The primary structure comprises 317 residues: Beta-ketoacyl-[acyl-carrier-protein] synthase III (317 aa).

Catalysis depends on residues Cys-112 and His-244. The tract at residues Gln-245–Arg-249 is ACP-binding. Asn-274 is a catalytic residue.

Belongs to the thiolase-like superfamily. FabH family. As to quaternary structure, homodimer.

It localises to the cytoplasm. The catalysed reaction is malonyl-[ACP] + acetyl-CoA + H(+) = 3-oxobutanoyl-[ACP] + CO2 + CoA. Its pathway is lipid metabolism; fatty acid biosynthesis. Its function is as follows. Catalyzes the condensation reaction of fatty acid synthesis by the addition to an acyl acceptor of two carbons from malonyl-ACP. Catalyzes the first condensation reaction which initiates fatty acid synthesis and may therefore play a role in governing the total rate of fatty acid production. Possesses both acetoacetyl-ACP synthase and acetyl transacylase activities. Its substrate specificity determines the biosynthesis of branched-chain and/or straight-chain of fatty acids. In Blochmanniella pennsylvanica (strain BPEN), this protein is Beta-ketoacyl-[acyl-carrier-protein] synthase III.